The sequence spans 450 residues: uncharacterized protein (450 aa).

Residues 1 to 58 (MQKNQIVDLEITDLSYEAMGVAHLDGMTVFVNNALPGEIVSAKLLKVKKNFAFAKIEK) enclose the TRAM domain. S-adenosyl-L-methionine is bound by residues glutamine 280, tyrosine 309, glutamate 330, and aspartate 378. Residue cysteine 405 is the Nucleophile of the active site.

The protein belongs to the class I-like SAM-binding methyltransferase superfamily. RNA M5U methyltransferase family.

This is an uncharacterized protein from Lactobacillus johnsonii (strain CNCM I-12250 / La1 / NCC 533).